The chain runs to 349 residues: Alanine racemase (349 aa).

Lysine 35 (proton acceptor; specific for D-alanine) is an active-site residue. At lysine 35 the chain carries N6-(pyridoxal phosphate)lysine. Residue arginine 130 coordinates substrate. Tyrosine 244 serves as the catalytic Proton acceptor; specific for L-alanine. Substrate is bound at residue methionine 292.

It belongs to the alanine racemase family. Pyridoxal 5'-phosphate is required as a cofactor.

It catalyses the reaction L-alanine = D-alanine. The protein operates within amino-acid biosynthesis; D-alanine biosynthesis; D-alanine from L-alanine: step 1/1. Catalyzes the interconversion of L-alanine and D-alanine. May also act on other amino acids. This chain is Alanine racemase (alr), found in Cereibacter sphaeroides (strain ATCC 17023 / DSM 158 / JCM 6121 / CCUG 31486 / LMG 2827 / NBRC 12203 / NCIMB 8253 / ATH 2.4.1.) (Rhodobacter sphaeroides).